A 204-amino-acid chain; its full sequence is Pyridoxamine 5'-phosphate oxidase YLR456W homolog (204 aa).

Residues 65 to 66 (FT) and Asn-127 contribute to the FMN site.

It belongs to the pyridoxamine 5'-phosphate oxidase family. Requires FMN as cofactor.

It is found in the cytoplasm. The protein resides in the nucleus. This Saccharomyces cerevisiae (strain ATCC 204508 / S288c) (Baker's yeast) protein is Pyridoxamine 5'-phosphate oxidase YLR456W homolog.